Consider the following 313-residue polypeptide: Porphobilinogen deaminase (313 aa).

Cysteine 241 carries the post-translational modification S-(dipyrrolylmethanemethyl)cysteine.

Belongs to the HMBS family. As to quaternary structure, monomer. Requires dipyrromethane as cofactor.

The enzyme catalyses 4 porphobilinogen + H2O = hydroxymethylbilane + 4 NH4(+). It participates in porphyrin-containing compound metabolism; protoporphyrin-IX biosynthesis; coproporphyrinogen-III from 5-aminolevulinate: step 2/4. Its function is as follows. Tetrapolymerization of the monopyrrole PBG into the hydroxymethylbilane pre-uroporphyrinogen in several discrete steps. This Bacillus velezensis (strain DSM 23117 / BGSC 10A6 / LMG 26770 / FZB42) (Bacillus amyloliquefaciens subsp. plantarum) protein is Porphobilinogen deaminase.